A 143-amino-acid polypeptide reads, in one-letter code: Large ribosomal subunit protein uL11 (143 aa).

Belongs to the universal ribosomal protein uL11 family. Part of the ribosomal stalk of the 50S ribosomal subunit. Interacts with L10 and the large rRNA to form the base of the stalk. L10 forms an elongated spine to which L12 dimers bind in a sequential fashion forming a multimeric L10(L12)X complex. In terms of processing, one or more lysine residues are methylated.

Its function is as follows. Forms part of the ribosomal stalk which helps the ribosome interact with GTP-bound translation factors. This chain is Large ribosomal subunit protein uL11, found in Polynucleobacter necessarius subsp. necessarius (strain STIR1).